The primary structure comprises 321 residues: Ribosomal RNA small subunit methyltransferase H (321 aa).

S-adenosyl-L-methionine contacts are provided by residues 44-46, Asp-64, Phe-88, Asp-109, and Gln-116; that span reads GGH.

This sequence belongs to the methyltransferase superfamily. RsmH family.

Its subcellular location is the cytoplasm. The enzyme catalyses cytidine(1402) in 16S rRNA + S-adenosyl-L-methionine = N(4)-methylcytidine(1402) in 16S rRNA + S-adenosyl-L-homocysteine + H(+). In terms of biological role, specifically methylates the N4 position of cytidine in position 1402 (C1402) of 16S rRNA. The polypeptide is Ribosomal RNA small subunit methyltransferase H (Methylobacillus flagellatus (strain ATCC 51484 / DSM 6875 / VKM B-1610 / KT)).